A 559-amino-acid polypeptide reads, in one-letter code: ATP synthase subunit beta-3, mitochondrial (559 aa).

The segment covering 1–28 has biased composition (low complexity); the sequence is MASRRILSSLLRSSSSRSTSKSSLIGSR. The disordered stretch occupies residues 1–39; sequence MASRRILSSLLRSSSSRSTSKSSLIGSRNPRLLSPGPAH. Residues 1-54 constitute a mitochondrion transit peptide; the sequence is MASRRILSSLLRSSSSRSTSKSSLIGSRNPRLLSPGPAHGAAPCGTLLGRVAEY. S62 is modified (phosphoserine). 234–241 serves as a coordination point for ATP; the sequence is GGAGVGKT.

It belongs to the ATPase alpha/beta chains family. In terms of assembly, F-type ATPases have 2 components, CF(1) - the catalytic core - and CF(0) - the membrane proton channel. CF(1) has five subunits: alpha(3), beta(3), gamma(1), delta(1), epsilon(1). CF(0) has three main subunits: a, b and c.

Its subcellular location is the mitochondrion. The protein localises to the mitochondrion inner membrane. It catalyses the reaction ATP + H2O + 4 H(+)(in) = ADP + phosphate + 5 H(+)(out). Mitochondrial membrane ATP synthase (F(1)F(0) ATP synthase or Complex V) produces ATP from ADP in the presence of a proton gradient across the membrane which is generated by electron transport complexes of the respiratory chain. F-type ATPases consist of two structural domains, F(1) - containing the extramembraneous catalytic core, and F(0) - containing the membrane proton channel, linked together by a central stalk and a peripheral stalk. During catalysis, ATP synthesis in the catalytic domain of F(1) is coupled via a rotary mechanism of the central stalk subunits to proton translocation. Subunits alpha and beta form the catalytic core in F(1). Rotation of the central stalk against the surrounding alpha(3)beta(3) subunits leads to hydrolysis of ATP in three separate catalytic sites on the beta subunits. The chain is ATP synthase subunit beta-3, mitochondrial from Arabidopsis thaliana (Mouse-ear cress).